The sequence spans 118 residues: Small ribosomal subunit protein uS13 (118 aa).

Positions 94–118 (SLPLRGQRTKTNARTRKGPRKPIKK) are disordered.

The protein belongs to the universal ribosomal protein uS13 family. As to quaternary structure, part of the 30S ribosomal subunit. Forms a loose heterodimer with protein S19. Forms two bridges to the 50S subunit in the 70S ribosome.

Its function is as follows. Located at the top of the head of the 30S subunit, it contacts several helices of the 16S rRNA. In the 70S ribosome it contacts the 23S rRNA (bridge B1a) and protein L5 of the 50S subunit (bridge B1b), connecting the 2 subunits; these bridges are implicated in subunit movement. Contacts the tRNAs in the A and P-sites. This is Small ribosomal subunit protein uS13 from Shewanella oneidensis (strain ATCC 700550 / JCM 31522 / CIP 106686 / LMG 19005 / NCIMB 14063 / MR-1).